Here is a 400-residue protein sequence, read N- to C-terminus: Argininosuccinate synthase (400 aa).

9-17 (AYSGGLDTS) is an ATP binding site. Tyr-87 provides a ligand contact to L-citrulline. Gly-117 contacts ATP. Residues Thr-119, Asn-123, and Asp-124 each coordinate L-aspartate. Asn-123 is an L-citrulline binding site. Residues Arg-127, Ser-176, Ser-185, Glu-261, and Tyr-273 each coordinate L-citrulline.

The protein belongs to the argininosuccinate synthase family. Type 1 subfamily. Homotetramer.

It is found in the cytoplasm. The enzyme catalyses L-citrulline + L-aspartate + ATP = 2-(N(omega)-L-arginino)succinate + AMP + diphosphate + H(+). It participates in amino-acid biosynthesis; L-arginine biosynthesis; L-arginine from L-ornithine and carbamoyl phosphate: step 2/3. The sequence is that of Argininosuccinate synthase from Chlorobium luteolum (strain DSM 273 / BCRC 81028 / 2530) (Pelodictyon luteolum).